A 155-amino-acid polypeptide reads, in one-letter code: Small ribosomal subunit protein uS7c (155 aa).

Belongs to the universal ribosomal protein uS7 family. Part of the 30S ribosomal subunit.

The protein localises to the plastid. The protein resides in the chloroplast. One of the primary rRNA binding proteins, it binds directly to 16S rRNA where it nucleates assembly of the head domain of the 30S subunit. The sequence is that of Small ribosomal subunit protein uS7c (rps7) from Lilium superbum (Turk's cap lily).